The following is a 264-amino-acid chain: 5'-nucleotidase SurE (264 aa).

Positions 10, 11, 43, and 99 each coordinate a divalent metal cation.

The protein belongs to the SurE nucleotidase family. A divalent metal cation is required as a cofactor.

The protein resides in the cytoplasm. The catalysed reaction is a ribonucleoside 5'-phosphate + H2O = a ribonucleoside + phosphate. Functionally, nucleotidase that shows phosphatase activity on nucleoside 5'-monophosphates. The chain is 5'-nucleotidase SurE from Methanococcus maripaludis (strain C7 / ATCC BAA-1331).